A 161-amino-acid chain; its full sequence is Allophycocyanin beta chain (161 aa).

The residue at position 71 (Asn71) is an N4-methylasparagine. Cys81 lines the (2R,3E)-phycocyanobilin pocket.

Belongs to the phycobiliprotein family. In terms of assembly, heterodimer of an alpha and a beta chain. Post-translationally, contains one covalently linked phycocyanobilin chromophore.

It is found in the cellular thylakoid membrane. Its function is as follows. Light-harvesting photosynthetic bile pigment-protein from the phycobiliprotein complex. Allophycocyanin has a maximum absorption at approximately 650 nanometers. The sequence is that of Allophycocyanin beta chain (apcB) from Arthrospira platensis (Spirulina platensis).